The sequence spans 379 residues: Histidinol-phosphate aminotransferase (379 aa).

Residue Lys-231 is modified to N6-(pyridoxal phosphate)lysine.

Belongs to the class-II pyridoxal-phosphate-dependent aminotransferase family. Histidinol-phosphate aminotransferase subfamily. Homodimer. Requires pyridoxal 5'-phosphate as cofactor.

It catalyses the reaction L-histidinol phosphate + 2-oxoglutarate = 3-(imidazol-4-yl)-2-oxopropyl phosphate + L-glutamate. Its pathway is amino-acid biosynthesis; L-histidine biosynthesis; L-histidine from 5-phospho-alpha-D-ribose 1-diphosphate: step 7/9. This chain is Histidinol-phosphate aminotransferase, found in Mycolicibacterium smegmatis (strain ATCC 700084 / mc(2)155) (Mycobacterium smegmatis).